A 482-amino-acid chain; its full sequence is tRNA sulfurtransferase (482 aa).

Positions 61-165 (SAIRDALTRI…QDRLLLIKGR (105 aa)) constitute a THUMP domain. ATP-binding positions include 183-184 (LI), Lys265, Gly287, and Gln296. The cysteines at positions 344 and 456 are disulfide-linked. Residues 404–482 (FAPTDVLLDI…GFSNVKVYRP (79 aa)) enclose the Rhodanese domain. Residue Cys456 is the Cysteine persulfide intermediate of the active site.

It belongs to the ThiI family.

The protein localises to the cytoplasm. It carries out the reaction [ThiI sulfur-carrier protein]-S-sulfanyl-L-cysteine + a uridine in tRNA + 2 reduced [2Fe-2S]-[ferredoxin] + ATP + H(+) = [ThiI sulfur-carrier protein]-L-cysteine + a 4-thiouridine in tRNA + 2 oxidized [2Fe-2S]-[ferredoxin] + AMP + diphosphate. It catalyses the reaction [ThiS sulfur-carrier protein]-C-terminal Gly-Gly-AMP + S-sulfanyl-L-cysteinyl-[cysteine desulfurase] + AH2 = [ThiS sulfur-carrier protein]-C-terminal-Gly-aminoethanethioate + L-cysteinyl-[cysteine desulfurase] + A + AMP + 2 H(+). The protein operates within cofactor biosynthesis; thiamine diphosphate biosynthesis. In terms of biological role, catalyzes the ATP-dependent transfer of a sulfur to tRNA to produce 4-thiouridine in position 8 of tRNAs, which functions as a near-UV photosensor. Also catalyzes the transfer of sulfur to the sulfur carrier protein ThiS, forming ThiS-thiocarboxylate. This is a step in the synthesis of thiazole, in the thiamine biosynthesis pathway. The sulfur is donated as persulfide by IscS. The sequence is that of tRNA sulfurtransferase from Pectobacterium carotovorum subsp. carotovorum (strain PC1).